The primary structure comprises 966 residues: Mitogen-activated protein kinase kinase kinase 13 (966 aa).

The segment at 1-59 is disordered; it reads MANPQEHLSCSSSPRLPLSENKTFNGLQDDLAPMGSHASPKLLKDQQEKGMVQTELAEG. Residues 8 to 19 show a composition bias toward low complexity; it reads LSCSSSPRLPLS. The Protein kinase domain maps to 168–409; the sequence is ISELQWLGSG…FRQTLMHLDI (242 aa). ATP-binding positions include 174-182 and K195; that span reads LGSGAQGAV. D279 (proton acceptor) is an active-site residue. Leucine-zipper regions lie at residues 433-454 and 486-507; these read VKKH…DEEL and LSAI…EQAV. Positions 457-496 form a coiled coil; it reads RRREELRHALDIREHYERKLERANNLYMELSAIMLQLEMR. Disordered stretches follow at residues 561–663, 743–874, and 937–966; these read EVAP…GQDI, LDVP…DELA, and QFEE…SATW. Positions 567–581 are enriched in low complexity; the sequence is SPLSGSPKLSSSSSK. The span at 582 to 594 shows a compositional bias: basic residues; the sequence is SRYRSKPRHRRGN. Polar residues predominate over residues 609–622; that stretch reads QPAQEDSPHPTSLH. Residues 629–642 are compositionally biased toward low complexity; that stretch reads PSSQHHNLLQQQYQ. The span at 814–827 shows a compositional bias: acidic residues; it reads DSSEEEEGEVDSEV. Positions 815–828 are acidic; that stretch reads SSEEEEGEVDSEVE. Positions 840–855 are enriched in polar residues; that stretch reads SSCQSYSTFSSENFSV. The segment covering 939–950 has biased composition (acidic residues); sequence EESDCDSSDGEC. Residues 954–966 show a composition bias toward polar residues; that stretch reads TVRTNKHYSSATW.

This sequence belongs to the protein kinase superfamily. Ser/Thr protein kinase family. Homodimer; forms dimers through the leucine-zipper motif. Interacts with the C-terminus of MAPK8IP1 through the kinase catalytic domain. Binds PRDX3. Associates with the IKK complex through the kinase domain. The cofactor is Mg(2+). Post-translationally, autophosphorylated on serine and threonine residues.

Its subcellular location is the cytoplasm. It localises to the membrane. It carries out the reaction L-seryl-[protein] + ATP = O-phospho-L-seryl-[protein] + ADP + H(+). It catalyses the reaction L-threonyl-[protein] + ATP = O-phospho-L-threonyl-[protein] + ADP + H(+). With respect to regulation, activated by autophosphorylation and homodimerization. Activates the JUN N-terminal pathway through activation of the MAP kinase kinase MAP2K7. Acts synergistically with PRDX3 to regulate the activation of NF-kappa-B in the cytosol. This activation is kinase-dependent and involves activating the IKK complex, the IKBKB-containing complex that phosphorylates inhibitors of NF-kappa-B. The sequence is that of Mitogen-activated protein kinase kinase kinase 13 (MAP3K13) from Bos taurus (Bovine).